Here is a 368-residue protein sequence, read N- to C-terminus: UDP-N-acetylglucosamine--N-acetylmuramyl-(pentapeptide) pyrophosphoryl-undecaprenol N-acetylglucosamine transferase (368 aa).

Residues 16 to 18 (TGG), Asn130, Arg171, Ser197, and Gln296 each bind UDP-N-acetyl-alpha-D-glucosamine.

The protein belongs to the glycosyltransferase 28 family. MurG subfamily.

The protein resides in the cell inner membrane. The catalysed reaction is di-trans,octa-cis-undecaprenyl diphospho-N-acetyl-alpha-D-muramoyl-L-alanyl-D-glutamyl-meso-2,6-diaminopimeloyl-D-alanyl-D-alanine + UDP-N-acetyl-alpha-D-glucosamine = di-trans,octa-cis-undecaprenyl diphospho-[N-acetyl-alpha-D-glucosaminyl-(1-&gt;4)]-N-acetyl-alpha-D-muramoyl-L-alanyl-D-glutamyl-meso-2,6-diaminopimeloyl-D-alanyl-D-alanine + UDP + H(+). It participates in cell wall biogenesis; peptidoglycan biosynthesis. Functionally, cell wall formation. Catalyzes the transfer of a GlcNAc subunit on undecaprenyl-pyrophosphoryl-MurNAc-pentapeptide (lipid intermediate I) to form undecaprenyl-pyrophosphoryl-MurNAc-(pentapeptide)GlcNAc (lipid intermediate II). This chain is UDP-N-acetylglucosamine--N-acetylmuramyl-(pentapeptide) pyrophosphoryl-undecaprenol N-acetylglucosamine transferase, found in Acidiphilium cryptum (strain JF-5).